The sequence spans 130 residues: Glycine cleavage system H protein (130 aa).

The region spanning 25 to 106 (VALIGITDFA…PFDTWMVKLK (82 aa)) is the Lipoyl-binding domain. Position 66 is an N6-lipoyllysine (Lys66).

It belongs to the GcvH family. In terms of assembly, the glycine cleavage system is composed of four proteins: P, T, L and H. It depends on (R)-lipoate as a cofactor.

In terms of biological role, the glycine cleavage system catalyzes the degradation of glycine. The H protein shuttles the methylamine group of glycine from the P protein to the T protein. This Leptospira biflexa serovar Patoc (strain Patoc 1 / Ames) protein is Glycine cleavage system H protein.